The chain runs to 826 residues: BLOC-2 complex member HPS5 homolog (826 aa).

WD repeat units follow at residues 22-61 (KHHN…LLLI), 63-102 (NKHG…QATP), and 110-149 (DQSV…GHSL). Residues 422 to 446 (ALDTHSSGGSSATTERSLSGGSSSR) are compositionally biased toward polar residues. Residues 422-447 (ALDTHSSGGSSATTERSLSGGSSSRA) form a disordered region.

The protein belongs to the HPS5 family. As to expression, expressed in eye pigment granules.

In terms of biological role, has a role in the biogenesis of eye pigment granules. Eye pigment granules are specialized forms of late endosomes or lysosomes. Biogenesis of pigment granules in the eye requires molecular components required for protein delivery to lysosomes. This is BLOC-2 complex member HPS5 homolog from Drosophila melanogaster (Fruit fly).